The primary structure comprises 23 residues: Major prohead-scaffolding core protein Gp22 (23 aa).

Residues 1 to 23 form a disordered region; sequence KAEEEVEKNKEEAEEKAEKKIAE. Residues 7-23 show a composition bias toward basic and acidic residues; that stretch reads EKNKEEAEEKAEKKIAE.

In terms of biological role, gp22 functions in head assembly. Functionally, internal peptide VII: Cleavage product of Gp22 that is incorporated into the mature phage head. The protein is Major prohead-scaffolding core protein Gp22 (22) of Enterobacteria phage T6 (Bacteriophage T6).